The chain runs to 568 residues: PTS system lactose-specific EIICB component (568 aa).

Residues 8–409 (IEKGKPFFEK…LVDTVIYYPF (402 aa)) form the PTS EIIC type-3 domain. Transmembrane regions (helical) follow at residues 30–50 (GFISAMPVILFSSIFLLIAYV), 65–85 (MLMTPYNYTMGIIGFLVAGTT), 103–123 (INFISTMLASMAGFLIMAADP), 128–148 (GFLSAFMGTKGLLTAFIAAFI), 183–203 (FAFSIIILYAIQLAIKAVIGV), 222–242 (GYLGITIIFGAYALFWFVGIH), 246–266 (IVEPAIAAITYSNVELNAHLI), 283–303 (FIVTMGGTGATLVVPFMFMWL), 339–359 (VFFIPFILAPIVNVWIFKFFV), and 381–401 (IVLGTGFAVLSFVLAALLILV). The PTS EIIB type-3 domain maps to 465-568 (ETNVLVLCAG…LAFVEEQFKD (104 aa)). Catalysis depends on C472, which acts as the Phosphocysteine intermediate; for EIIB activity. Phosphocysteine; by EIIA is present on C472.

It localises to the cell membrane. It catalyses the reaction lactose(out) + N(pros)-phospho-L-histidyl-[protein] = lactose 6-phosphate(in) + L-histidyl-[protein]. In terms of biological role, the phosphoenolpyruvate-dependent sugar phosphotransferase system (sugar PTS), a major carbohydrate active transport system, catalyzes the phosphorylation of incoming sugar substrates concomitantly with their translocation across the cell membrane. The enzyme II LacEF PTS system is involved in lactose transport. The chain is PTS system lactose-specific EIICB component from Streptococcus mutans serotype c (strain ATCC 700610 / UA159).